The primary structure comprises 199 residues: Nucleoside triphosphate pyrophosphatase (199 aa).

Residue Asp76 is the Proton acceptor of the active site.

Belongs to the Maf family. A divalent metal cation serves as cofactor.

The protein localises to the cytoplasm. It catalyses the reaction a ribonucleoside 5'-triphosphate + H2O = a ribonucleoside 5'-phosphate + diphosphate + H(+). It carries out the reaction a 2'-deoxyribonucleoside 5'-triphosphate + H2O = a 2'-deoxyribonucleoside 5'-phosphate + diphosphate + H(+). Nucleoside triphosphate pyrophosphatase. May have a dual role in cell division arrest and in preventing the incorporation of modified nucleotides into cellular nucleic acids. The protein is Nucleoside triphosphate pyrophosphatase of Ruegeria sp. (strain TM1040) (Silicibacter sp.).